The chain runs to 545 residues: Carboxylesterase 5A (545 aa).

The first 28 residues, 1-28 (MSGMWVHPGRTLIWALWVLAAVIKGPAA), serve as a signal peptide directing secretion. Residue Asn86 is glycosylated (N-linked (GlcNAc...) (complex) asparagine). Cys94 and Cys121 form a disulfide bridge. A glycan (N-linked (GlcNAc...) asparagine) is linked at Asn134. Catalysis depends on Ser226, which acts as the Acyl-ester intermediate. Cysteines 281 and 292 form a disulfide. Residue Glu346 is the Charge relay system of the active site. Residues Asn363 and Asn443 are each glycosylated (N-linked (GlcNAc...) asparagine). His454 functions as the Charge relay system in the catalytic mechanism.

The protein belongs to the type-B carboxylesterase/lipase family. N-glycosylated; contains a fucosylated complex carbohydrate. As to expression, present at high level in urine. Expressed in the kidney proximal straight tubular cells and is secreted from the apical compartment of the cells into the urine (at protein level). In mature cats, it is present at higher level in intact males than in castrated males or in intact or spayed females.

It localises to the secreted. It catalyses the reaction a carboxylic ester + H2O = an alcohol + a carboxylate + H(+). In terms of biological role, carboxylesterase present at high level in urine that regulates production of felinine, a probable pheromone precursor. Probably acts by hydrolyzing the peptide bond of the felinine precursor 3-methylbutanol cyteinylglycine, producing felinine and glycine in cat urine. The chain is Carboxylesterase 5A (CES5A) from Felis catus (Cat).